We begin with the raw amino-acid sequence, 271 residues long: MELKNELCTVLEQIKEKTPLVHHITNYVTVNDCANITLAIGGSPVMADDHKEVEDMVSIASAVVLNIGTLNERTIESFVLAGKKANELNIPVILDPVGAGATAFRSQTIEKILKEVKLSVLRGNMSEIKNIYGTGTQTKGVDSVDSSLDGGKEIAISLAKKLSCTVVITGEVDIVSDGNKTYAIQNGHKALSSITGTGCMSASLIGACCGTGKGILQGAILGTMIMGIAGEKANERLKVHEGLGSFKVYLMDAVSNFDQDDIRKRGKVDEI.

Met-46 is a binding site for substrate. 2 residues coordinate ATP: Arg-122 and Thr-169. Gly-196 is a binding site for substrate.

This sequence belongs to the Thz kinase family. Mg(2+) serves as cofactor.

It carries out the reaction 5-(2-hydroxyethyl)-4-methylthiazole + ATP = 4-methyl-5-(2-phosphooxyethyl)-thiazole + ADP + H(+). It participates in cofactor biosynthesis; thiamine diphosphate biosynthesis; 4-methyl-5-(2-phosphoethyl)-thiazole from 5-(2-hydroxyethyl)-4-methylthiazole: step 1/1. Catalyzes the phosphorylation of the hydroxyl group of 4-methyl-5-beta-hydroxyethylthiazole (THZ). This chain is Hydroxyethylthiazole kinase, found in Alkaliphilus oremlandii (strain OhILAs) (Clostridium oremlandii (strain OhILAs)).